A 184-amino-acid chain; its full sequence is Ribosome maturation factor RimM (184 aa).

A PRC barrel domain is found at 111–184 (DDEFYWVDLI…HIVVDWGLDY (74 aa)).

The protein belongs to the RimM family. In terms of assembly, binds ribosomal protein uS19.

It is found in the cytoplasm. Its function is as follows. An accessory protein needed during the final step in the assembly of 30S ribosomal subunit, possibly for assembly of the head region. Essential for efficient processing of 16S rRNA. May be needed both before and after RbfA during the maturation of 16S rRNA. It has affinity for free ribosomal 30S subunits but not for 70S ribosomes. The polypeptide is Ribosome maturation factor RimM (Ralstonia nicotianae (strain ATCC BAA-1114 / GMI1000) (Ralstonia solanacearum)).